A 931-amino-acid polypeptide reads, in one-letter code: MAEVEAVQLKEEGNRHFQLQDYKAATNSYSQALKLTKDKALLATLYRNRAACGLKTESYVQAASDASRAIDINSSDIKALYRRCQALEHLGKLDQAFKDVQRCATLEPRNQNFQEMLRRLNTSIQEKLRVQFSTDSRVQKMFEILLDENSEADKREKAANNLIVLGREEAGAEKIFQNNGVALLLQLLDTKKPELVLAAVRTLSGMCSGHQARATVILHAVRIDRICSLMAVENEEMSLAVCNLLQAIIDSLSGEDKREHRGKEEALVLDTKKDLKQITSHLLDMLVSKKVSGQGRDQALNLLNKNVPRKDLAIHDNSRTIYVVDNGLRKILKVVGQVPDLPSCLPLTDNTRMLASILINKLYDDLRCDPERDHFRKICEEYITGKFDPQDMDKNLNAIQTVSGILQGPFDLGNQLLGLKGVMEMMVALCGSERETDQLVAVEALIHASTKLSRATFIITNGVSLLKQIYKTTKNEKIKIRTLVGLCKLGSAGGTDYGLRQFAEGSTEKLAKQCRKWLCNMSIDTRTRRWAVEGLAYLTLDADVKDDFVQDVPALQAMFELAKAGTSDKTILYSVATTLVNCTNSYDVKEVIPELVQLAKFSKQHVPEEHPKDKKDFIDMRVKRLLKAGVISALACMVKADSAILTDQTKELLARVFLALCDNPKDRGTIVAQGGGKALIPLALEGTDVGKVKAAHALAKIAAVSNPDIAFPGERVYEVVRPLVRLLDTQRDGLQNYEALLGLTNLSGRSDKLRQKIFKERALPDIENYMFENHDQLRQAATECMCNMVLHKEVQERFLADGNDRLKLVVLLCGEDDDKVQNAAAGALAMLTAAHKKLCLKMTQVTTQWLEILQRLCLHDQLSVQHRGLVIAYNLLAADAELAKKLVESELLEILTVVGKQEPDEKKAEVVQTARECLIKCMDYGFIKPVS.

TPR repeat units follow at residues 6–39 (AVQLKEEGNRHFQLQDYKAATNSYSQALKLTKDK), 43–76 (ATLYRNRAACGLKTESYVQAASDASRAIDINSSD), and 77–110 (IKALYRRCQALEHLGKLDQAFKDVQRCATLEPRN). ARM repeat units lie at residues 169-208 (EAGAEKIFQNNGVALLLQLLDTKKPELVLAAVRTLSGMCS), 211-250 (QARATVILHAVRIDRICSLMAVENEEMSLAVCNLLQAIID), and 751-790 (DKLRQKIFKERALPDIENYMFENHDQLRQAATECMCNMVL).

As to quaternary structure, interacts with HSP90 in an ATP-independent manner. Interacts with UBE4B; the interaction may target UNC45B for proteasomal degradation. In terms of tissue distribution, expressed in eye lens tissues. Expressed in muscle (at protein level).

The protein resides in the cytoplasm. It is found in the myofibril. It localises to the sarcomere. Its subcellular location is the z line. The protein localises to the a band. The protein resides in the perinuclear region. It is found in the cytosol. Its function is as follows. Acts as a co-chaperone for HSP90 and is required for proper folding of the myosin motor domain. Plays a role in sarcomere formation during muscle cell development. Is necessary for normal early lens development. This is Protein unc-45 homolog B from Homo sapiens (Human).